Consider the following 82-residue polypeptide: Endocuticle structural glycoprotein ABD-5 (82 aa).

Pyrrolidone carboxylic acid is present on Q1. Residues 18–82 (LGQYNFAYRT…ENGYQPRVQS (65 aa)) enclose the Chitin-binding type R&amp;R domain.

Its function is as follows. Component of the soft endocuticle of migratory locust. The protein is Endocuticle structural glycoprotein ABD-5 of Locusta migratoria (Migratory locust).